A 66-amino-acid polypeptide reads, in one-letter code: Large ribosomal subunit protein bL31 (66 aa).

The Zn(2+) site is built by cysteine 16, cysteine 18, cysteine 36, and cysteine 39.

Belongs to the bacterial ribosomal protein bL31 family. Type A subfamily. In terms of assembly, part of the 50S ribosomal subunit. The cofactor is Zn(2+).

Its function is as follows. Binds the 23S rRNA. This is Large ribosomal subunit protein bL31 from Moorella thermoacetica (strain ATCC 39073 / JCM 9320).